A 998-amino-acid polypeptide reads, in one-letter code: RNA-directed RNA polymerase (998 aa).

2 interaction with host mitochondria outer membrane regions span residues 1 to 67 and 233 to 250; these read MTLK…DKTK and VRTSWKEWFLQLPLRMIG. The interval 1–400 is homomultimerization; the sequence is MTLKVILGEH…KPTMPRVHWP (400 aa). A helical membrane pass occupies residues 17 to 34; sequence LLVGIATVSGCGAVVYCI. Positions 35-998 are cytoplasmic; that stretch reads SKFWGYGAIA…AQPQPSNNRK (964 aa). A capping region spans residues 91–282; the sequence is NGHAVSGAVR…LVYTIPQYVI (192 aa). The active-site For RdRp/TNTase activity is D692. Positions 700–800 are homomultimerization; that stretch reads IQKSINRAAK…MVLRLYGPTA (101 aa). Residues 901-998 are disordered; that stretch reads AKQTRANPGT…AQPQPSNNRK (98 aa). Polar residues-rich tracts occupy residues 904–913 and 947–961; these read TRANPGTSRP and GKTNGKSDGNITAGE. Positions 971 to 984 are enriched in basic residues; that stretch reads KGPRGGKTNTRRTP.

The protein belongs to the nodaviridae RNA polymerase family. As to quaternary structure, homododecamer. Forms 2 stacked rings of 35-nm in diameter, arranged in a crown-like structure at the opening of virus-induced replication vesicles. Interacts with protein B2. The cofactor is Mn(2+).

It localises to the host mitochondrion outer membrane. It carries out the reaction RNA(n) + a ribonucleoside 5'-triphosphate = RNA(n+1) + diphosphate. With respect to regulation, drastically inhibited by phosphonoacetic acid. Only slightly inhibited by gliotoxin. In terms of biological role, RNA-dependent RNA polymerase, which replicates the viral genome composed of 2 RNA segments, RNA1 and RNA2. Does not need an exogenous primer. Also possesses a terminal nucleotidyl transferase (TNTase) activity. The TNTase catalyzes the addition of nucleotide to the 3'-end of plus- and minus-stranded RNAs, probably to repair the 3'-end nucleotide loss. Forms the open necked connection to the cytosol of the virus-induced replication vesicles. Mediates viral RNA1 recruitment. The polypeptide is RNA-directed RNA polymerase (Costelytra zealandica (Greater wax moth)).